The following is a 399-amino-acid chain: Zinc finger HIT domain-containing protein 2 (399 aa).

Residue Met-1 is modified to N-acetylmethionine. The Zn(2+) site is built by Cys-7, Cys-10, Cys-22, Cys-25, Cys-30, Cys-34, His-38, and Cys-41. The HIT-type zinc finger occupies Cys-7–Cys-41. Disordered regions lie at residues Arg-70 to Gly-97 and Ala-152 to Phe-175. Positions Leu-86 to Ser-96 are enriched in gly residues. At Thr-161 the chain carries Phosphothreonine.

As to quaternary structure, interacts (via HIT-type zinc finger) with RUVBL2 in the presence of ATP or ADP; shows a stronger interaction in the presence of ADP. As to expression, low expression in most tissues; highly expressed in testis; particularly in seminiferous tubules.

In terms of biological role, may act as a bridging factor mediating the interaction between the R2TP/Prefoldin-like (R2TP/PFDL) complex and U5 small nuclear ribonucleoprotein (U5 snRNP). Required for the interaction of R2TP complex subunit RPAP3 and prefoldin-like subunit URI1 with U5 snRNP proteins EFTUD2 and PRPF8. May play a role in regulating the composition of the U5 snRNP complex. The chain is Zinc finger HIT domain-containing protein 2 (Znhit2) from Mus musculus (Mouse).